Here is a 448-residue protein sequence, read N- to C-terminus: Probable glycine dehydrogenase (decarboxylating) subunit 1 (448 aa).

The protein belongs to the GcvP family. N-terminal subunit subfamily. The glycine cleavage system is composed of four proteins: P, T, L and H. In this organism, the P 'protein' is a heterodimer of two subunits.

It carries out the reaction N(6)-[(R)-lipoyl]-L-lysyl-[glycine-cleavage complex H protein] + glycine + H(+) = N(6)-[(R)-S(8)-aminomethyldihydrolipoyl]-L-lysyl-[glycine-cleavage complex H protein] + CO2. Functionally, the glycine cleavage system catalyzes the degradation of glycine. The P protein binds the alpha-amino group of glycine through its pyridoxal phosphate cofactor; CO(2) is released and the remaining methylamine moiety is then transferred to the lipoamide cofactor of the H protein. This chain is Probable glycine dehydrogenase (decarboxylating) subunit 1, found in Thermomicrobium roseum (strain ATCC 27502 / DSM 5159 / P-2).